The primary structure comprises 108 residues: MASRRSAAAKKEDFSFEAAATQSAHEAQEGFPSSVIIKLVLVTVAMICAPLGTYFGTLNTICGGDSSYAGALAAISVNVVLIIYLIIAAREDTGESEEERKGKEGKEE.

Residues 1–34 (MASRRSAAAKKEDFSFEAAATQSAHEAQEGFPSS) lie on the Cytoplasmic side of the membrane. A helical transmembrane segment spans residues 35-55 (VIIKLVLVTVAMICAPLGTYF). The Lumenal segment spans residues 56 to 68 (GTLNTICGGDSSY). The helical transmembrane segment at 69–89 (AGALAAISVNVVLIIYLIIAA) threads the bilayer. Over 90-108 (REDTGESEEERKGKEGKEE) the chain is Cytoplasmic.

This sequence belongs to the VMA21 family.

Its subcellular location is the endoplasmic reticulum membrane. It is found in the endoplasmic reticulum-Golgi intermediate compartment membrane. The protein resides in the cytoplasmic vesicle. The protein localises to the COPII-coated vesicle membrane. Functionally, required for the assembly of the V0 complex of the vacuolar ATPase (V-ATPase) in the endoplasmic reticulum. This is Vacuolar ATPase assembly integral membrane protein VMA21 from Ajellomyces capsulatus (strain NAm1 / WU24) (Darling's disease fungus).